A 317-amino-acid chain; its full sequence is L-lactate dehydrogenase (317 aa).

NAD(+)-binding positions include Val-17, Asp-38, Lys-43, and 82 to 83; that span reads GA. Substrate is bound by residues Gln-85, Arg-91, and 123–126; that span reads NPVD. Residues 121-123 and Ser-146 contribute to the NAD(+) site; that span reads VAN. Residue 151-154 coordinates substrate; the sequence is DSAR. The beta-D-fructose 1,6-bisphosphate site is built by Arg-156 and His-171. His-178 acts as the Proton acceptor in catalysis. Tyr-224 carries the phosphotyrosine modification. Thr-233 contributes to the substrate binding site.

The protein belongs to the LDH/MDH superfamily. LDH family. As to quaternary structure, homotetramer.

Its subcellular location is the cytoplasm. The enzyme catalyses (S)-lactate + NAD(+) = pyruvate + NADH + H(+). Its pathway is fermentation; pyruvate fermentation to lactate; (S)-lactate from pyruvate: step 1/1. Its activity is regulated as follows. Allosterically activated by fructose 1,6-bisphosphate (FBP). Its function is as follows. Catalyzes the conversion of lactate to pyruvate. In Moorella thermoacetica (strain ATCC 39073 / JCM 9320), this protein is L-lactate dehydrogenase.